A 1369-amino-acid chain; its full sequence is MutS protein homolog 5 (1369 aa).

A disordered region spans residues 138–190 (IYEDGTTEEGTSEDTVPTWDSSLAYSTDETTAEKEEKEEDEDDDDEGLPAKLN). Positions 173–184 (EKEEDEDDDDEG) are enriched in acidic residues. 639-646 (GPNACGKS) serves as a coordination point for ATP. Disordered stretches follow at residues 880–915 (SMRN…SVLS), 935–1135 (KKKK…RSSN), 1153–1182 (LKSQ…HSQN), and 1248–1278 (NFIF…SSIS). Positions 884-894 (VSEEIEKERSE) are enriched in basic and acidic residues. Polar residues-rich tracts occupy residues 895-915 (ASTP…SVLS) and 941-950 (TGSSMESSMS). Over residues 954–967 (FQEEDEGTEGEEDQ) the composition is skewed to acidic residues. A compositionally biased stretch (polar residues) spans 991 to 1003 (QSINSRHSFSTRT). Over residues 1024–1037 (STSTSSPGPSASKS) the composition is skewed to low complexity. The span at 1049-1065 (VKESQVLETPKQLSISS) shows a compositional bias: polar residues. Residues 1073–1084 (SSEKDVISRVSE) show a composition bias toward basic and acidic residues. 2 stretches are compositionally biased toward polar residues: residues 1111-1124 (KNRS…QSAR) and 1153-1167 (LKSQ…TPRS). Residues 1254 to 1263 (PEPRSSEKQR) are compositionally biased toward basic and acidic residues.

It belongs to the DNA mismatch repair MutS family. As to quaternary structure, heterooligomer of him-14 and msh-5. Interacts with the brc-1-brd-1 heterodimer. Expressed in the germline.

The protein resides in the chromosome. Its function is as follows. Crucial component in meiotic recombination, functioning at some point after the initiation step of recombination. Plays a role in promoting the crossover outcome of meiotic recombination events. Required for formation of normal meiotic crossover, and crossover and chiasmata generated by artificially made DNA breaks. Together with him-14 and zhp-3 plays a role in the activation of DNA damage-dependent apoptosis at the DNA damage checkpoint in pachytene cells. In Caenorhabditis elegans, this protein is MutS protein homolog 5.